Consider the following 434-residue polypeptide: Nicotinate phosphoribosyltransferase (434 aa).

Histidine 242 is subject to Phosphohistidine; by autocatalysis.

Belongs to the NAPRTase family. Transiently phosphorylated on a His residue during the reaction cycle. Phosphorylation strongly increases the affinity for substrates and increases the rate of nicotinate D-ribonucleotide production. Dephosphorylation regenerates the low-affinity form of the enzyme, leading to product release.

It carries out the reaction nicotinate + 5-phospho-alpha-D-ribose 1-diphosphate + ATP + H2O = nicotinate beta-D-ribonucleotide + ADP + phosphate + diphosphate. The protein operates within cofactor biosynthesis; NAD(+) biosynthesis; nicotinate D-ribonucleotide from nicotinate: step 1/1. Its function is as follows. Catalyzes the synthesis of beta-nicotinate D-ribonucleotide from nicotinate and 5-phospho-D-ribose 1-phosphate at the expense of ATP. The protein is Nicotinate phosphoribosyltransferase of Bradyrhizobium diazoefficiens (strain JCM 10833 / BCRC 13528 / IAM 13628 / NBRC 14792 / USDA 110).